The following is a 307-amino-acid chain: Mitochondrial 2-oxodicarboxylate carrier 2 (307 aa).

The next 6 helical transmembrane spans lie at 10 to 30, 76 to 95, 122 to 142, 171 to 191, 215 to 235, and 280 to 300; these read LPFI…LTVM, SRLY…KRAT, IAAG…FELI, GLYK…GGYF, LIAG…FDVV, and CRLA…MNFF. Solcar repeat units lie at residues 10–106, 116–200, and 209–299; these read LPFI…YQKI, TTQK…VRNS, and QKTR…MMNF.

This sequence belongs to the mitochondrial carrier (TC 2.A.29) family.

It localises to the mitochondrion inner membrane. In terms of biological role, transports C5-C7 oxodicarboxylates across the inner membranes of mitochondria. Can transport 2-oxoadipate, 2-oxoglutarate, adipate, glutarate, 2-oxopimelate, oxaloacetate, citrate and malate. The main physiological role is probably to supply 2-oxoadipate and 2-oxoglutarate from the mitochondrial matrix to the cytosol where they are used in the biosynthesis of lysine and glutamate, respectively, and in lysine catabolism. The protein is Mitochondrial 2-oxodicarboxylate carrier 2 (ODC2) of Saccharomyces cerevisiae (strain ATCC 204508 / S288c) (Baker's yeast).